The following is a 147-amino-acid chain: UPF0306 protein YhbP (147 aa).

This sequence belongs to the UPF0306 family.

This Salmonella paratyphi A (strain AKU_12601) protein is UPF0306 protein YhbP.